A 245-amino-acid chain; its full sequence is Ribonuclease PH (245 aa).

Residues Arg-86 and 124 to 126 (GTR) contribute to the phosphate site.

It belongs to the RNase PH family. Homohexameric ring arranged as a trimer of dimers.

The enzyme catalyses tRNA(n+1) + phosphate = tRNA(n) + a ribonucleoside 5'-diphosphate. In terms of biological role, phosphorolytic 3'-5' exoribonuclease that plays an important role in tRNA 3'-end maturation. Removes nucleotide residues following the 3'-CCA terminus of tRNAs; can also add nucleotides to the ends of RNA molecules by using nucleoside diphosphates as substrates, but this may not be physiologically important. Probably plays a role in initiation of 16S rRNA degradation (leading to ribosome degradation) during starvation. The chain is Ribonuclease PH from Bacillus velezensis (strain DSM 23117 / BGSC 10A6 / LMG 26770 / FZB42) (Bacillus amyloliquefaciens subsp. plantarum).